A 736-amino-acid polypeptide reads, in one-letter code: Putative ATP-dependent RNA helicase CG14443 (736 aa).

4 disordered regions span residues 32 to 58, 73 to 166, 183 to 237, and 265 to 296; these read TKSS…SSVL, GIEG…GERP, NSFK…NSWR, and SFTR…NTWK. Composition is skewed to low complexity over residues 34-58 and 125-160; these read SSIW…SSVL and SSES…SHGS. Positions 190 to 199 are enriched in basic and acidic residues; it reads TSRENKESRS. The segment covering 277–296 has biased composition (polar residues); it reads LCYQDQSKNPSRPSNYNTWK. The short motif at 330 to 358 is the Q motif element; it reads LSFERSGFNATILQQLEDQGYDGPTPIQA. The region spanning 361 to 534 is the Helicase ATP-binding domain; that stretch reads WSIAKEGKNI…NKFLGQYTAI (174 aa). Position 374-381 (374-381) interacts with ATP; sequence SGKGTGKT. The short motif at 482–485 is the DEAD box element; that stretch reads DNID. The 159-residue stretch at 561-719 folds into the Helicase C-terminal domain; the sequence is KVERLMKELT…LLQLAEEKMF (159 aa).

Belongs to the DEAD box helicase family.

It carries out the reaction ATP + H2O = ADP + phosphate + H(+). Functionally, probable ATP-binding RNA helicase. The polypeptide is Putative ATP-dependent RNA helicase CG14443 (Drosophila melanogaster (Fruit fly)).